Consider the following 358-residue polypeptide: Protein RecA (358 aa).

An ATP-binding site is contributed by 67-74 (GPESSGKT).

It belongs to the RecA family.

The protein resides in the cytoplasm. Can catalyze the hydrolysis of ATP in the presence of single-stranded DNA, the ATP-dependent uptake of single-stranded DNA by duplex DNA, and the ATP-dependent hybridization of homologous single-stranded DNAs. It interacts with LexA causing its activation and leading to its autocatalytic cleavage. The polypeptide is Protein RecA (Xenorhabdus nematophila (strain ATCC 19061 / DSM 3370 / CCUG 14189 / LMG 1036 / NCIMB 9965 / AN6)).